A 365-amino-acid chain; its full sequence is MSKPAVKSVPSATAKTATRAVNIRQKVKAPKQAKPEAKGRAKPSKDKPRAEIKKALHPRNAHLNGYDFPALYAAFTQLKTFVRPTPYGTLSIDFADPLAVKTLNAALLKHHYGIGAWDIPQGALCPPIPGRVDYVHYVADLLAEGDKSCAMDKARVLDIGTGANGIYPILGCQVYGWQYVASDINAHSLTNVQSIIEQNPVLQGRISLRLQPDDKAVFKGVIQAEERFELTLCNPPFHASMAEASEGTKRKVNNLQLNRGSSVKAAPKLNFGGQAAELWCQGGERQFLATMIRESQMFADQCLWFTSLVSKQENLKPCYQALAQLNVDTVKTIEMQQGNKITRVLAWSFQSAAKRKIWRAEHLAN.

The segment at 1–50 (MSKPAVKSVPSATAKTATRAVNIRQKVKAPKQAKPEAKGRAKPSKDKPRA) is disordered. The segment covering 33–50 (AKPEAKGRAKPSKDKPRA) has biased composition (basic and acidic residues).

Belongs to the methyltransferase superfamily. METTL16/RlmF family.

The protein resides in the cytoplasm. It carries out the reaction adenosine(1618) in 23S rRNA + S-adenosyl-L-methionine = N(6)-methyladenosine(1618) in 23S rRNA + S-adenosyl-L-homocysteine + H(+). Functionally, specifically methylates the adenine in position 1618 of 23S rRNA. This is Ribosomal RNA large subunit methyltransferase F from Shewanella baltica (strain OS155 / ATCC BAA-1091).